The following is a 319-amino-acid chain: V-set and transmembrane domain-containing protein 4 (319 aa).

The first 23 residues, 1–23, serve as a signal peptide directing secretion; it reads MRLRLLALAAAVLLGPAPEVCGA. An Ig-like domain is found at 24 to 154; sequence LNVTVSPGPV…SSATEMRVIS (131 aa). N-linked (GlcNAc...) asparagine glycans are attached at residues asparagine 25 and asparagine 41. Cysteine 46 and cysteine 126 are disulfide-bonded. Asparagine 143 carries an N-linked (GlcNAc...) asparagine glycan. The helical transmembrane segment at 180-200 threads the bilayer; sequence AVLVCCVGILSVLLFTLVIAW.

Post-translationally, proteolytically cleaved to generate a bioactive peptide. As to expression, peptide Lv is widely expressed in various tissues and the central nervous system, including the retinal photoreceptor layer, hippocampus, olfactory bulb, and cerebellum.

It is found in the cell membrane. It localises to the secreted. Peptide Lv enhances L-type voltage-gated calcium channel (L-VGCC) currents in retinal photoreceptors. This chain is V-set and transmembrane domain-containing protein 4 (Vstm4), found in Mus musculus (Mouse).